The chain runs to 177 residues: Bifunctional protein PyrR (177 aa).

The short motif at 99-111 (VILIDDVLYTGRT) is the PRPP-binding element.

The protein belongs to the purine/pyrimidine phosphoribosyltransferase family. PyrR subfamily. Homodimer and homohexamer; in equilibrium.

The enzyme catalyses UMP + diphosphate = 5-phospho-alpha-D-ribose 1-diphosphate + uracil. In terms of biological role, regulates transcriptional attenuation of the pyrimidine nucleotide (pyr) operon by binding in a uridine-dependent manner to specific sites on pyr mRNA. This disrupts an antiterminator hairpin in the RNA and favors formation of a downstream transcription terminator, leading to a reduced expression of downstream genes. Its function is as follows. Also displays a weak uracil phosphoribosyltransferase activity which is not physiologically significant. This is Bifunctional protein PyrR from Pediococcus pentosaceus (strain ATCC 25745 / CCUG 21536 / LMG 10740 / 183-1w).